Reading from the N-terminus, the 335-residue chain is D-arabinose 1-dehydrogenase (335 aa).

Tyr-58 serves as the catalytic Proton donor. Residue His-124 participates in substrate binding. 221 to 287 (SLLRSQETRQ…VSSMEELKLA (67 aa)) provides a ligand contact to NAD(+).

The protein belongs to the aldo/keto reductase family. Aldo/keto reductase 2 subfamily.

The catalysed reaction is D-arabinose + NAD(+) = D-arabinono-1,4-lactone + NADH + H(+). In Saccharomyces cerevisiae (strain ATCC 204508 / S288c) (Baker's yeast), this protein is D-arabinose 1-dehydrogenase (ARA2).